A 178-amino-acid polypeptide reads, in one-letter code: UPF0228 protein MA_4223 (178 aa).

It belongs to the UPF0228 family.

In Methanosarcina acetivorans (strain ATCC 35395 / DSM 2834 / JCM 12185 / C2A), this protein is UPF0228 protein MA_4223.